Here is a 969-residue protein sequence, read N- to C-terminus: Protein translocase subunit SecA (969 aa).

ATP-binding positions include Gln-99, 117-121 (GEGKT), and Asp-631.

Belongs to the SecA family. Monomer and homodimer. Part of the essential Sec protein translocation apparatus which comprises SecA, SecYEG and auxiliary proteins SecDF. Other proteins may also be involved.

It localises to the cell inner membrane. Its subcellular location is the cytoplasm. The catalysed reaction is ATP + H2O + cellular proteinSide 1 = ADP + phosphate + cellular proteinSide 2.. Its function is as follows. Part of the Sec protein translocase complex. Interacts with the SecYEG preprotein conducting channel. Has a central role in coupling the hydrolysis of ATP to the transfer of proteins into and across the cell membrane, serving as an ATP-driven molecular motor driving the stepwise translocation of polypeptide chains across the membrane. The chain is Protein translocase subunit SecA from Chlamydia trachomatis serovar A (strain ATCC VR-571B / DSM 19440 / HAR-13).